The chain runs to 567 residues: DNA ligase B (567 aa).

Lysine 132 (N6-AMP-lysine intermediate) is an active-site residue.

It belongs to the NAD-dependent DNA ligase family. LigB subfamily.

The enzyme catalyses NAD(+) + (deoxyribonucleotide)n-3'-hydroxyl + 5'-phospho-(deoxyribonucleotide)m = (deoxyribonucleotide)n+m + AMP + beta-nicotinamide D-nucleotide.. Its function is as follows. Catalyzes the formation of phosphodiester linkages between 5'-phosphoryl and 3'-hydroxyl groups in double-stranded DNA using NAD as a coenzyme and as the energy source for the reaction. The protein is DNA ligase B of Yersinia pestis.